Consider the following 131-residue polypeptide: Arsenate reductase 2 (131 aa).

Active-site nucleophile residues include Cys10, Cys82, and Cys89. 2 disulfide bridges follow: Cys10/Cys82 and Cys82/Cys89.

The protein belongs to the low molecular weight phosphotyrosine protein phosphatase family. Thioredoxin-coupled ArsC subfamily.

The protein localises to the cytoplasm. The enzyme catalyses arsenate + [thioredoxin]-dithiol + H(+) = arsenite + [thioredoxin]-disulfide + H2O. In terms of biological role, catalyzes the reduction of arsenate [As(V)] to arsenite [As(III)]. This Staphylococcus haemolyticus (strain JCSC1435) protein is Arsenate reductase 2.